Reading from the N-terminus, the 209-residue chain is UPF0502 protein PSHAa0076 (209 aa).

Belongs to the UPF0502 family.

The sequence is that of UPF0502 protein PSHAa0076 from Pseudoalteromonas translucida (strain TAC 125).